We begin with the raw amino-acid sequence, 137 residues long: Large ribosomal subunit protein uL16 (137 aa).

The protein belongs to the universal ribosomal protein uL16 family. Part of the 50S ribosomal subunit.

In terms of biological role, binds 23S rRNA and is also seen to make contacts with the A and possibly P site tRNAs. In Nitratidesulfovibrio vulgaris (strain DSM 19637 / Miyazaki F) (Desulfovibrio vulgaris), this protein is Large ribosomal subunit protein uL16.